Reading from the N-terminus, the 239-residue chain is MGGNQFRFKQFTIRQDRCAMKVGTDGTLLGAWVDVSGAEKILDIGTGTGLIALMLAQRSSQLKVDIDAVEIDINSSIQARENVERSRWSDRVKVENYSIQKYIDICQKRYDLIVSNPPFFENASKPVKKARTVARHTDFLSQADLLQAAVKLLSDTGKLAVIYPVEQAHNFQEKAEYLGLFCQRKLDVKPMPKIPTKRILMELSKKKLPLQKNTLTIEVKQYTYTPEFITLIKDFYLKY.

Belongs to the methyltransferase superfamily. tRNA (adenine-N(6)-)-methyltransferase family.

It localises to the cytoplasm. The catalysed reaction is adenosine(37) in tRNA1(Val) + S-adenosyl-L-methionine = N(6)-methyladenosine(37) in tRNA1(Val) + S-adenosyl-L-homocysteine + H(+). Its function is as follows. Specifically methylates the adenine in position 37 of tRNA(1)(Val) (anticodon cmo5UAC). The sequence is that of tRNA1(Val) (adenine(37)-N6)-methyltransferase from Trichodesmium erythraeum (strain IMS101).